A 197-amino-acid chain; its full sequence is MKRIGLLGGSFDPIHVAHVTLAQSALAHLQLDEVQLVPAANPWQRAPLAATAQDRLAMINAAITGLPGLAVNTSEIQRGGATYTVDTILALPQDARYTWILGADQLANFCTWRDWETIVRHVDLAVATRPGSTLQAAPELAQALLEAGRSLRELPFTPMPVSASEIRQRLAQGQNTEGLLPEGVARHIAEHGLYRPA.

The protein belongs to the NadD family.

The catalysed reaction is nicotinate beta-D-ribonucleotide + ATP + H(+) = deamido-NAD(+) + diphosphate. It functions in the pathway cofactor biosynthesis; NAD(+) biosynthesis; deamido-NAD(+) from nicotinate D-ribonucleotide: step 1/1. Functionally, catalyzes the reversible adenylation of nicotinate mononucleotide (NaMN) to nicotinic acid adenine dinucleotide (NaAD). This is Probable nicotinate-nucleotide adenylyltransferase from Bordetella avium (strain 197N).